The following is a 433-amino-acid chain: Adenosylhomocysteinase A (433 aa).

Substrate is bound by residues Thr57, Asp132, Glu157, Lys187, and Asp191. Positions 184 to 351 (SVTKSKFDNL…EGRLVNLGCA (168 aa)) are NAD binding.

It belongs to the adenosylhomocysteinase family. Homotetramer. It depends on NAD(+) as a cofactor.

The protein localises to the cytoplasm. The catalysed reaction is S-adenosyl-L-homocysteine + H2O = L-homocysteine + adenosine. Its pathway is amino-acid biosynthesis; L-homocysteine biosynthesis; L-homocysteine from S-adenosyl-L-homocysteine: step 1/1. In terms of biological role, catalyzes the hydrolysis of S-adenosyl-L-homocysteine to form adenosine and homocysteine. Binds copper ions. This chain is Adenosylhomocysteinase A (ahcy-a), found in Xenopus laevis (African clawed frog).